Reading from the N-terminus, the 268-residue chain is Undecaprenyl-diphosphatase (268 aa).

7 helical membrane passes run 47–67 (FAVL…FVKL), 83–103 (FVIG…AFGG), 109–129 (LFNP…LLWV), 144–164 (FPLL…IPGV), 184–204 (AAEF…VYDL), 217–237 (IIVA…VKTF), and 248–268 (LFAW…ALGL).

The protein belongs to the UppP family.

It localises to the cell inner membrane. It catalyses the reaction di-trans,octa-cis-undecaprenyl diphosphate + H2O = di-trans,octa-cis-undecaprenyl phosphate + phosphate + H(+). Functionally, catalyzes the dephosphorylation of undecaprenyl diphosphate (UPP). Confers resistance to bacitracin. The sequence is that of Undecaprenyl-diphosphatase from Rhodopseudomonas palustris (strain ATCC BAA-98 / CGA009).